We begin with the raw amino-acid sequence, 334 residues long: Probable tRNA pseudouridine synthase B (334 aa).

Asp-82 (nucleophile) is an active-site residue. The PUA domain maps to Leu-250–Met-325.

This sequence belongs to the pseudouridine synthase TruB family. Type 2 subfamily.

It carries out the reaction uridine(55) in tRNA = pseudouridine(55) in tRNA. Could be responsible for synthesis of pseudouridine from uracil-55 in the psi GC loop of transfer RNAs. This Thermococcus onnurineus (strain NA1) protein is Probable tRNA pseudouridine synthase B.